The chain runs to 633 residues: Probable potassium transport system protein Kup 2 (633 aa).

12 helical membrane passes run 18–38, 61–81, 107–127, 143–163, 173–193, 211–231, 255–275, 287–307, 345–365, 371–391, 402–422, and 427–447; these read FLALTIGAIGVVYGDIGTSPL, LVSLVLWTLTAIVTIKYVLFL, PVLMFFAGVLGAALFIGDAMI, VAPALHDYVLPISVVIILLLF, VSVFFGPITLVWFLMMAAAGV, AIGFLWNAGLIGFIVLGAIFL, WFAVVFPALALNYLGQGALVL, LMFPNWALLPMVILATAATII, IYLPLVNTILLTGVLALMLMF, LAPAYGVSITGAMVIDTILAF, ALTAIAVLLPLFNLELVFLGA, and VHHGGYVPILIAGTLITMMWT.

This sequence belongs to the HAK/KUP transporter (TC 2.A.72) family.

It localises to the cell inner membrane. The enzyme catalyses K(+)(in) + H(+)(in) = K(+)(out) + H(+)(out). Functionally, transport of potassium into the cell. Likely operates as a K(+):H(+) symporter. The sequence is that of Probable potassium transport system protein Kup 2 from Rhizobium meliloti (strain 1021) (Ensifer meliloti).